The sequence spans 602 residues: Aryl hydrocarbon receptor protein 1 (602 aa).

The propeptide occupies 1–2 (MY). Basic residues predominate over residues 1–12 (MYASKRRQRNFK). A disordered region spans residues 1–28 (MYASKRRQRNFKRVRDPPKQLTNTNPSK). 2 short sequence motifs (nuclear localization signal) span residues 5–8 (KRRQ) and 28–33 (KRHRER). Positions 18–71 (PKQLTNTNPSKRHRERLNGELETVAMLLPYDSSTISRLDKLSVLRLAVSFLQCK) constitute a bHLH domain. Required for maintaining the overall integrity of the AHR:ARNT heterodimer and its transcriptional activity regions lie at residues 41 to 73 (VAML…CKAH), 133 to 141 (SLKSLGGFI), and 266 to 268 (ICV). Residues 55 to 63 (LDKLSVLRL) carry the Nuclear export signal motif. The PAS domain occupies 126 to 196 (ESNFEEISLK…QQLDSNFHIP (71 aa)). The segment at 440–467 (STSNSLFPSVPVPTPTTTKANRRRKENS) is disordered.

In terms of assembly, interacts with daf-21/hsp90. Interacts with aha-1. In terms of tissue distribution, expressed in many distinct neuronal cells including RMED, RMEV, RMEL and RMER. Functions in URX neurons to promote aggregation behavior.

It localises to the nucleus. In terms of biological role, probable ligand-activated transcriptional activator. Acts as a transcriptional regulator in GABAergic motor neuron cell fate specification and development. Promotes cell-type-specific expression of guanylate cyclase genes that have key roles in aggregation behavior and hyperoxia avoidance. Has no role in carbon dioxide avoidance. This chain is Aryl hydrocarbon receptor protein 1, found in Caenorhabditis elegans.